The sequence spans 446 residues: Phosphoglucosamine mutase (446 aa).

Residue Ser102 is the Phosphoserine intermediate of the active site. Residues Ser102, Asp241, Asp243, and Asp245 each coordinate Mg(2+). The residue at position 102 (Ser102) is a Phosphoserine.

Belongs to the phosphohexose mutase family. Mg(2+) is required as a cofactor. Activated by phosphorylation.

It carries out the reaction alpha-D-glucosamine 1-phosphate = D-glucosamine 6-phosphate. Catalyzes the conversion of glucosamine-6-phosphate to glucosamine-1-phosphate. The sequence is that of Phosphoglucosamine mutase from Idiomarina loihiensis (strain ATCC BAA-735 / DSM 15497 / L2-TR).